Reading from the N-terminus, the 232-residue chain is uncharacterized protein (232 aa).

The chain crosses the membrane as a helical span at residues 10–32; that stretch reads GLTIYLYPVIAWIILVTKIESGL.

It is found in the membrane. This is an uncharacterized protein from Archaeoglobus fulgidus (strain ATCC 49558 / DSM 4304 / JCM 9628 / NBRC 100126 / VC-16).